The sequence spans 55 residues: Large ribosomal subunit protein bL33 (55 aa).

The protein belongs to the bacterial ribosomal protein bL33 family.

This Aliivibrio fischeri (strain ATCC 700601 / ES114) (Vibrio fischeri) protein is Large ribosomal subunit protein bL33.